The following is a 271-amino-acid chain: Membrane protein insertase YidC 1 (271 aa).

Positions 1–20 (MKKKLKTFSLILLTGSLLVA) are cleaved as a signal peptide. Cysteine 21 carries N-palmitoyl cysteine lipidation. Cysteine 21 is lipidated: S-diacylglycerol cysteine. The next 4 membrane-spanning stretches (helical) occupy residues 45-65 (IQWLSFNHSIGLGIILFTLII), 124-144 (YASVLPLLIQLPVLWALFQAL), 163-183 (PDPYYILPVLAALFTFLSTWL), and 201-221 (VMPFIILVTSFNFASGVVLYW).

This sequence belongs to the OXA1/ALB3/YidC family. Type 2 subfamily.

It localises to the cell membrane. Its function is as follows. Required for the insertion and/or proper folding and/or complex formation of integral membrane proteins into the membrane. Involved in integration of membrane proteins that insert both dependently and independently of the Sec translocase complex, as well as at least some lipoproteins. This is Membrane protein insertase YidC 1 from Streptococcus agalactiae serotype III (strain NEM316).